Here is a 443-residue protein sequence, read N- to C-terminus: Phosphoglucosamine mutase (443 aa).

The Phosphoserine intermediate role is filled by Ser100. Positions 100, 239, 241, and 243 each coordinate Mg(2+). Ser100 carries the post-translational modification Phosphoserine.

This sequence belongs to the phosphohexose mutase family. Requires Mg(2+) as cofactor. Post-translationally, activated by phosphorylation.

The enzyme catalyses alpha-D-glucosamine 1-phosphate = D-glucosamine 6-phosphate. Its function is as follows. Catalyzes the conversion of glucosamine-6-phosphate to glucosamine-1-phosphate. This is Phosphoglucosamine mutase from Shewanella loihica (strain ATCC BAA-1088 / PV-4).